Reading from the N-terminus, the 423-residue chain is Putative competence-damage inducible protein (423 aa).

This sequence belongs to the CinA family.

In Streptococcus pyogenes serotype M18 (strain MGAS8232), this protein is Putative competence-damage inducible protein.